A 275-amino-acid polypeptide reads, in one-letter code: Exosome complex component Rrp42 (275 aa).

The protein belongs to the RNase PH family. Rrp42 subfamily. Component of the archaeal exosome complex. Forms a hexameric ring-like arrangement composed of 3 Rrp41-Rrp42 heterodimers. The hexameric ring associates with a trimer of Rrp4 and/or Csl4 subunits.

It is found in the cytoplasm. Non-catalytic component of the exosome, which is a complex involved in RNA degradation. Contributes to the structuring of the Rrp41 active site. The polypeptide is Exosome complex component Rrp42 (Saccharolobus islandicus (strain Y.N.15.51 / Yellowstone #2) (Sulfolobus islandicus)).